A 141-amino-acid polypeptide reads, in one-letter code: MAKKIVGQIKLQINAGKATPAPPVGPALGQHGVNIMGFCKEFNAKTADQAGLIIPVVISVYQDRSYSFITKTPPAAVLIKKAIGIQSGSGEPNKKKVAKISKDKIREIAELKMPDLNAASLEAAMSMISGTARSMGVVVED.

Belongs to the universal ribosomal protein uL11 family. As to quaternary structure, part of the ribosomal stalk of the 50S ribosomal subunit. Interacts with L10 and the large rRNA to form the base of the stalk. L10 forms an elongated spine to which L12 dimers bind in a sequential fashion forming a multimeric L10(L12)X complex. In terms of processing, one or more lysine residues are methylated.

Functionally, forms part of the ribosomal stalk which helps the ribosome interact with GTP-bound translation factors. This is Large ribosomal subunit protein uL11 from Alkaliphilus oremlandii (strain OhILAs) (Clostridium oremlandii (strain OhILAs)).